The chain runs to 245 residues: Phosducin (245 aa).

Acidic residues predominate over residues 1–14 (MEEAKSQSLEEDFE). The interval 1–68 (MEEAKSQSLE…RDNKDSKERF (68 aa)) is disordered. The Phosducin domain occupies 1–241 (MEEAKSQSLE…THALDQTNME (241 aa)). The segment covering 59-68 (RDNKDSKERF) has biased composition (basic and acidic residues). Ser-73 is subject to Phosphoserine; by PKA. The thioredoxin fold stretch occupies residues 111–245 (YGFVYELETG…DQTNMEEDIE (135 aa)).

It belongs to the phosducin family. As to quaternary structure, interacts with CRX. Forms a complex with the beta and gamma subunits of the GTP-binding protein, transducin. In terms of processing, light-induced changes in cyclic nucleotide levels modulate the phosphorylation of this protein by cAMP kinase.

Its subcellular location is the cytoplasm. The protein localises to the cytosol. It is found in the nucleus. It localises to the cell projection. The protein resides in the cilium. Its subcellular location is the photoreceptor outer segment. The protein localises to the photoreceptor inner segment. Functionally, inhibits the transcriptional activation activity of the cone-rod homeobox CRX. May participate in the regulation of visual phototransduction or in the integration of photoreceptor metabolism. The chain is Phosducin (PDC) from Felis catus (Cat).